A 461-amino-acid polypeptide reads, in one-letter code: Pyruvate kinase (461 aa).

Substrate is bound at residue Arg-46. Residues Asn-48 and Asp-80 each contribute to the K(+) site. Position 48 to 51 (48 to 51) interacts with ATP; it reads NLAH. 2 residues coordinate ATP: Arg-87 and Lys-165. Residue Glu-232 participates in Mg(2+) binding. Substrate contacts are provided by Gly-255, Asp-256, and Thr-288. Asp-256 contacts Mg(2+).

It belongs to the pyruvate kinase family. As to quaternary structure, homotetramer. A divalent metal cation is required as a cofactor.

It catalyses the reaction pyruvate + ATP = phosphoenolpyruvate + ADP + H(+). The protein operates within carbohydrate degradation; glycolysis; pyruvate from D-glyceraldehyde 3-phosphate: step 5/5. With respect to regulation, not activated by classical allosteric effectors. This is Pyruvate kinase (pyk) from Pyrobaculum aerophilum (strain ATCC 51768 / DSM 7523 / JCM 9630 / CIP 104966 / NBRC 100827 / IM2).